The sequence spans 143 residues: MYTCAKFVSTPSLIRRTSTLLSRSLSAVVVRRPETLTDESHSSLAVVPRPLTTSLTPSRSFQTSAISRDIDTAAKFIGAGAATVGVAGSGAGIGTVFGSLIIGYARNPSLKQQLFSYAILGFALSEAMGLFCLMVAFLILFAM.

A mitochondrion-targeting transit peptide spans 1 to 68 (MYTCAKFVST…RSFQTSAISR (68 aa)). A helical membrane pass occupies residues 84–104 (VGVAGSGAGIGTVFGSLIIGY). At Lys111 the chain carries N6,N6,N6-trimethyllysine. Residues 119–139 (ILGFALSEAMGLFCLMVAFLI) traverse the membrane as a helical segment.

This sequence belongs to the ATPase C chain family. F-type ATPases have 2 components, CF(1) - the catalytic core - and CF(0) - the membrane proton channel. CF(1) has five subunits: alpha(3), beta(3), gamma(1), delta(1), epsilon(1). CF(0) has three main subunits: a, b and c. Interacts with DNAJC30; interaction is direct. Trimethylated by ATPSCKMT at Lys-111. Methylation is required for proper incorporation of the C subunit into the ATP synthase complex and mitochondrial respiration.

The protein localises to the mitochondrion membrane. In terms of biological role, mitochondrial membrane ATP synthase (F(1)F(0) ATP synthase or Complex V) produces ATP from ADP in the presence of a proton gradient across the membrane which is generated by electron transport complexes of the respiratory chain. F-type ATPases consist of two structural domains, F(1) - containing the extramembraneous catalytic core and F(0) - containing the membrane proton channel, linked together by a central stalk and a peripheral stalk. During catalysis, ATP synthesis in the catalytic domain of F(1) is coupled via a rotary mechanism of the central stalk subunits to proton translocation. Part of the complex F(0) domain. A homomeric c-ring of probably 10 subunits is part of the complex rotary element. This is ATP synthase F(0) complex subunit C2, mitochondrial from Ovis aries (Sheep).